A 92-amino-acid chain; its full sequence is Small ribosomal subunit protein uS19c (92 aa).

It belongs to the universal ribosomal protein uS19 family.

The protein localises to the plastid. The protein resides in the chloroplast. Functionally, protein S19 forms a complex with S13 that binds strongly to the 16S ribosomal RNA. The polypeptide is Small ribosomal subunit protein uS19c (Chloranthus spicatus (Chulantree)).